A 549-amino-acid chain; its full sequence is Sphingosine-1-phosphate transporter SPNS2 (549 aa).

Disordered stretches follow at residues 14-36 (AEEE…GAGG) and 78-97 (PGCA…PASL). A run of 11 helical transmembrane segments spans residues 141-161 (GLLQ…FGYL), 169-189 (VILS…SFIP), 202-222 (LVGI…GDLF), 229-249 (LMLS…YITG), 261-281 (WALR…LILV), 320-340 (LATS…PLYL), 364-384 (LIFG…GAGA), 398-418 (LVCA…FVAA), 422-442 (IVGA…NWAI), 466-486 (TSHL…SDLI), and 507-527 (LCPF…LFFL).

This sequence belongs to the major facilitator superfamily. Spinster (TC 2.A.1.49) family. As to expression, expression is high in the lungs and liver, low in the lymph nodes, spleen and bone marrow, and very low but detectable in the thymus. Not expressed in red blood cells. Also expressed in the inner ear: expressed in the cochlea, both in the lateral wall and organ of Corti.

Its subcellular location is the cell membrane. It is found in the endosome membrane. The enzyme catalyses sphing-4-enine 1-phosphate(in) = sphing-4-enine 1-phosphate(out). The catalysed reaction is sphinganine 1-phosphate(in) = sphinganine 1-phosphate(out). In terms of biological role, lipid transporter that specifically mediates export of sphingosine-1-phosphate (sphing-4-enine 1-phosphate, S1P) and sphinganine-1-phosphate in the lymph, thereby playing a role in lymphocyte trafficking. S1P is a bioactive signaling molecule that regulates many physiological processes important for the development and for the immune system. Regulates levels of S1P and the S1P gradient that exists between the high circulating concentrations of S1P and low tissue levels that control lymphocyte trafficking. Required for the egress of T-cells from lymph nodes during an immune response by mediating S1P secretion, which generates a gradient that enables activated T-cells to access lymph. Also required for the egress of immature B-cells from the bone marrow. In contrast, it does not mediate S1P release from red blood cells. Involved in auditory function: S1P release in the inner ear is required for maintenance of the endocochlear potential in the cochlea. In addition to export, also able to mediate S1P import. The chain is Sphingosine-1-phosphate transporter SPNS2 from Mus musculus (Mouse).